Consider the following 713-residue polypeptide: Cadherin-13 (713 aa).

The first 22 residues, M1 to A22, serve as a signal peptide directing secretion. A propeptide spanning residues E23–R138 is cleaved from the precursor. N-linked (GlcNAc...) asparagine glycans are attached at residues N52 and N86. Cadherin domains are found at residues S139–F245, R246–F363, T364–F477, Y478–I585, and F584–A694. A disordered region spans residues P156 to K178. Residues D158–K172 show a composition bias toward basic and acidic residues. N382, N489, N500, N530, N598, N638, and N671 each carry an N-linked (GlcNAc...) asparagine glycan. A lipid anchor (GPI-anchor amidated glycine) is attached at G693. The propeptide at A694 to L713 is removed in mature form.

As to quaternary structure, by contrast to classical cadherins, homodimerization in trans is not mediated by cadherin EC1 domain strand-swapping, but instead through a homophilic adhesive interface which joins two elongated EC1-EC2 domains through a region near their Ca2+-binding sites to form a tetrahedral, X-like shape.

It is found in the cell membrane. The protein resides in the cytoplasm. Cadherins are calcium-dependent cell adhesion proteins. They preferentially interact with themselves in a homophilic manner in connecting cells; cadherins may thus contribute to the sorting of heterogeneous cell types. May act as a negative regulator of neural cell growth. The protein is Cadherin-13 (CDH13) of Bos taurus (Bovine).